A 297-amino-acid polypeptide reads, in one-letter code: Large ribosomal subunit protein uL18 (297 aa).

Glycine 2 is subject to N-acetylglycine. N6-acetyllysine is present on residues lysine 5 and lysine 48. A Phosphoserine modification is found at serine 185. Lysine 220 is subject to N6-acetyllysine; alternate. Lysine 220 is covalently cross-linked (Glycyl lysine isopeptide (Lys-Gly) (interchain with G-Cter in SUMO1); alternate). Lysine 220 is covalently cross-linked (Glycyl lysine isopeptide (Lys-Gly) (interchain with G-Cter in SUMO2); alternate). Residue threonine 232 is modified to Phosphothreonine. Residues 253–297 (YEKKPKKEVKKKRWNRPKMSLAQKKDRVAQKKASFLRAQERAAES) form a disordered region. Residues 258–268 (KKEVKKKRWNR) are compositionally biased toward basic residues. At serine 272 the chain carries Phosphoserine.

Belongs to the universal ribosomal protein uL18 family. As to quaternary structure, component of the large ribosomal subunit (LSU). Part of the 5S RNP complex, which is a LSU subcomplex composed of the 5S RNA, RPL5 and RPL11. Component of a hexameric 5S RNP precursor complex, composed of 5S RNA, RRS1, RPF2/BXDC1, RPL5, RPL11 and HEATR3; this complex acts as a precursor for ribosome assembly. Interacts with NVL in an ATP-dependent manner. Interacts with RRP1B. Interacts with IPO5, IPO7 and KPNB1; these interactions may be involved in RPL5 nuclear import for the assembly of ribosomal subunits. Interacts with RRP1B.

The protein resides in the cytoplasm. It localises to the nucleus. Its subcellular location is the nucleolus. Its function is as follows. Component of the ribosome, a large ribonucleoprotein complex responsible for the synthesis of proteins in the cell. The small ribosomal subunit (SSU) binds messenger RNAs (mRNAs) and translates the encoded message by selecting cognate aminoacyl-transfer RNA (tRNA) molecules. The large subunit (LSU) contains the ribosomal catalytic site termed the peptidyl transferase center (PTC), which catalyzes the formation of peptide bonds, thereby polymerizing the amino acids delivered by tRNAs into a polypeptide chain. The nascent polypeptides leave the ribosome through a tunnel in the LSU and interact with protein factors that function in enzymatic processing, targeting, and the membrane insertion of nascent chains at the exit of the ribosomal tunnel. As part of the 5S RNP/5S ribonucleoprotein particle it is an essential component of the LSU, required for its formation and the maturation of rRNAs. It also couples ribosome biogenesis to p53/TP53 activation. As part of the 5S RNP it accumulates in the nucleoplasm and inhibits MDM2, when ribosome biogenesis is perturbed, mediating the stabilization and the activation of TP53. The polypeptide is Large ribosomal subunit protein uL18 (RPL5) (Macaca fascicularis (Crab-eating macaque)).